We begin with the raw amino-acid sequence, 136 residues long: UPF0216 protein PH0358 (136 aa).

Belongs to the UPF0216 family.

The protein is UPF0216 protein PH0358 of Pyrococcus horikoshii (strain ATCC 700860 / DSM 12428 / JCM 9974 / NBRC 100139 / OT-3).